The chain runs to 311 residues: Methionyl-tRNA formyltransferase (311 aa).

Residue 117–120 (SLLP) participates in (6S)-5,6,7,8-tetrahydrofolate binding.

It belongs to the Fmt family.

It catalyses the reaction L-methionyl-tRNA(fMet) + (6R)-10-formyltetrahydrofolate = N-formyl-L-methionyl-tRNA(fMet) + (6S)-5,6,7,8-tetrahydrofolate + H(+). Its function is as follows. Attaches a formyl group to the free amino group of methionyl-tRNA(fMet). The formyl group appears to play a dual role in the initiator identity of N-formylmethionyl-tRNA by promoting its recognition by IF2 and preventing the misappropriation of this tRNA by the elongation apparatus. The protein is Methionyl-tRNA formyltransferase of Bordetella avium (strain 197N).